The sequence spans 543 residues: Protein GPR108 (543 aa).

An N-terminal signal peptide occupies residues 1–32; it reads MAVSERRGLGRGSPAEWGQRLLLVLLLGGCSG. N-linked (GlcNAc...) asparagine glycosylation is found at N57 and N109. The disordered stretch occupies residues 149–186; that stretch reads SKPGLPKPQATVPRKVDGGGTSAASKPKSTPAVIQGPS. Residues N200, N204, and N228 are each glycosylated (N-linked (GlcNAc...) asparagine). A run of 7 helical transmembrane segments spans residues 263–283, 292–312, 336–356, 367–387, 401–421, 449–469, and 473–493; these read LYMV…SILC, IHWL…FHSI, LLKG…WAFI, VFGI…IIES, ILFL…VWSI, VMVI…QVAV, and WQWL…VLTG. N534 carries an N-linked (GlcNAc...) asparagine glycan.

The protein belongs to the LU7TM family.

Its subcellular location is the golgi apparatus. The protein resides in the cis-Golgi network membrane. The protein localises to the trans-Golgi network membrane. It is found in the golgi apparatus membrane. In terms of biological role, may play a role in intracellular immune modulation by activating NF-kappaB response and attenuating Toll-like-receptor response. (Microbial infection) Plays an essential function in adeno-associated virus (AAV) transduction across multiple serotypes except AAV5. May play a critical role in mediating the endosomal virus escape or in the AAV virions trafficking from endosomes to the nucleus. This chain is Protein GPR108, found in Homo sapiens (Human).